We begin with the raw amino-acid sequence, 37 residues long: Large ribosomal subunit protein bL36c (37 aa).

Belongs to the bacterial ribosomal protein bL36 family.

Its subcellular location is the plastid. The protein localises to the chloroplast. The polypeptide is Large ribosomal subunit protein bL36c (Lactuca sativa (Garden lettuce)).